A 248-amino-acid polypeptide reads, in one-letter code: Chitin deacetylase (248 aa).

A signal peptide spans M1–R26. 2 disulfide bridges follow: C38–C237 and C148–C152. Residues G42–V232 enclose the NodB homology domain. Catalysis depends on D49, which acts as the Proton acceptor. An acetate-binding site is contributed by D49. Residues D50, H104, and H108 each coordinate Co(2+). Acetate is bound at residue Y145. Residue H206 is the Proton donor of the active site.

The protein belongs to the polysaccharide deacetylase family. In terms of assembly, monomer. Requires Co(2+) as cofactor. Post-translationally, N-glycosylated.

It localises to the secreted. It catalyses the reaction [(1-&gt;4)-N-acetyl-beta-D-glucosaminyl](n) + n H2O = chitosan + n acetate. In terms of biological role, hydrolyzes the N-acetamido groups of N-acetyl-D-glucosamine polymers in chitin to form chitosan and acetate. May play a role in evasion of the host immune response; plant chitinases liberate chitin molecules from the fungal cell wall which act as elicitors of the plant immune response, deacetylation of the liberated chitin neutralizes elicitor activity. The sequence is that of Chitin deacetylase from Colletotrichum lindemuthianum (Bean anthracnose fungus).